The following is a 633-amino-acid chain: Phosphomethylpyrimidine synthase (633 aa).

Substrate contacts are provided by residues Asn-245, Met-274, Tyr-303, His-339, 359–361 (SRG), 400–403 (DGLR), and Glu-439. His-443 contacts Zn(2+). Tyr-466 provides a ligand contact to substrate. Residue His-507 coordinates Zn(2+). Residues Cys-587, Cys-590, and Cys-595 each coordinate [4Fe-4S] cluster.

This sequence belongs to the ThiC family. As to quaternary structure, homodimer. The cofactor is [4Fe-4S] cluster.

The enzyme catalyses 5-amino-1-(5-phospho-beta-D-ribosyl)imidazole + S-adenosyl-L-methionine = 4-amino-2-methyl-5-(phosphooxymethyl)pyrimidine + CO + 5'-deoxyadenosine + formate + L-methionine + 3 H(+). It functions in the pathway cofactor biosynthesis; thiamine diphosphate biosynthesis. In terms of biological role, catalyzes the synthesis of the hydroxymethylpyrimidine phosphate (HMP-P) moiety of thiamine from aminoimidazole ribotide (AIR) in a radical S-adenosyl-L-methionine (SAM)-dependent reaction. The chain is Phosphomethylpyrimidine synthase from Neisseria meningitidis serogroup B (strain ATCC BAA-335 / MC58).